Consider the following 26-residue polypeptide: uncharacterized protein (26 aa).

The segment covering 1–16 (MPEQKANCSPNGNITV) has biased composition (polar residues). Residues 1–26 (MPEQKANCSPNGNITVDSMIMSLGSS) form a disordered region.

This is an uncharacterized protein from Saccharomyces cerevisiae (strain ATCC 204508 / S288c) (Baker's yeast).